A 794-amino-acid chain; its full sequence is Protein SPA1-RELATED 4 (794 aa).

Positions 1–268 constitute a Protein kinase domain; sequence MKGSSESSSR…MSELLQSEFI (268 aa). A disordered region spans residues 126–165; that stretch reads SCSDSGSDEDATTKSREIGSSRQEEILSERRSKQQEEVKK. Residues 136-165 are compositionally biased toward basic and acidic residues; that stretch reads ATTKSREIGSSRQEEILSERRSKQQEEVKK. Residues 272 to 326 are a coiled coil; that stretch reads RENLEEREAAMELRDRIEEQELLLEFLFLIQQRKQEAADKLQDTISLLSSDIDQV. Disordered regions lie at residues 352 to 373 and 428 to 447; these read QGAE…EESK and GRSS…INDS. A compositionally biased stretch (acidic residues) spans 358-369; the sequence is AAEEENDDNSID. WD repeat units lie at residues 482 to 521, 531 to 571, 574 to 614, 616 to 656, 660 to 698, 707 to 746, and 762 to 794; these read NSSN…KDGR, ASRS…LVTE, EHEK…SIGT, KTKA…LPLC, GHHK…SGIN, GHTN…PVLS, and DASQ…LEMV. Residues 635–649 carry the DWD box motif; sequence AFGSADHKVYYYDLR.

In terms of assembly, interacts with COP1 and CO. Binds to CRY1 in response to blue light, this interaction prevents SPA1/COP1 complex formation and thus avoid COP1-dependent degradation of the transcription factor HY5 by the proteasome and promotes hypocotyl elongation.

Its subcellular location is the nucleus. In terms of biological role, repressor of photomorphogenesis in the light. Probably part of the COP1/SPA E3 ubiquitin-protein ligase complex. In Arabidopsis thaliana (Mouse-ear cress), this protein is Protein SPA1-RELATED 4 (SPA4).